Reading from the N-terminus, the 633-residue chain is Transcriptional repressor p66-alpha (633 aa).

Over residues 1 to 18 (MTEEACRTRSQKRALERD) the composition is skewed to basic and acidic residues. Disordered regions lie at residues 1 to 59 (MTEE…PTQG) and 73 to 119 (RGEG…RVNG). Residues Thr-20 and Thr-49 each carry the phosphothreonine modification. The segment covering 86–99 (RTSHSDMKSERRPP) has biased composition (basic and acidic residues). Residue Lys-93 forms a Glycyl lysine isopeptide (Lys-Gly) (interchain with G-Cter in SUMO2) linkage. Phosphoserine occurs at positions 100, 107, 113, 114, and 137. Over residues 108–119 (DNEQPSSPRVNG) the composition is skewed to polar residues. Residues 139–174 (EERERMIKQLKEELRLEEAKLVLLKKLRQSQIQKEA) are a coiled coil. A CR1; interaction with HDAC1, HDAC2, MBD2 and MTA2 region spans residues 144 to 178 (MIKQLKEELRLEEAKLVLLKKLRQSQIQKEATAQK). The segment covering 172 to 188 (KEATAQKPTGSVGSTVT) has biased composition (polar residues). Residues 172-238 (KEATAQKPTG…QASSKLGPQA (67 aa)) form a disordered region. Residue Lys-178 forms a Glycyl lysine isopeptide (Lys-Gly) (interchain with G-Cter in SUMO2) linkage. The interval 181-295 (GSVGSTVTTP…IIQQGLIRVA (115 aa)) is interaction with ZMYND8. Thr-189 is modified (phosphothreonine). A compositionally biased stretch (polar residues) spans 196 to 212 (GTQNIPAGKPSLQTSSA). Lys-204 participates in a covalent cross-link: Glycyl lysine isopeptide (Lys-Gly) (interchain with G-Cter in SUMO2). An Omega-N-methylarginine modification is found at Arg-225. The span at 228-238 (QQASSKLGPQA) shows a compositional bias: polar residues. A Glycyl lysine isopeptide (Lys-Gly) (interchain with G-Cter in SUMO2) cross-link involves residue Lys-233. Arg-249, Arg-258, and Arg-273 each carry omega-N-methylarginine. Position 275 is a phosphoserine (Ser-275). Position 285 is an omega-N-methylarginine (Arg-285). Phosphoserine occurs at positions 340 and 343. The interval 340 to 480 (SPASRQAAAK…EIEQRLLQQG (141 aa)) is CR2; histone tail-binding and interaction with CHD4 and CDK2AP1. Residues 411-464 (SREPYMCAQCKTDFTCRWREEKSGAIMCENCMTTNQKKALKVEHTSRLKAAFVK) form a GATA-type zinc finger. Residues Lys-464 and Lys-487 each participate in a glycyl lysine isopeptide (Lys-Gly) (interchain with G-Cter in SUMO2) cross-link. Phosphoserine is present on Ser-512. Residue Arg-539 is modified to Asymmetric dimethylarginine; alternate. The residue at position 539 (Arg-539) is an Omega-N-methylarginine; alternate. Phosphoserine occurs at positions 546 and 548. A Glycyl lysine isopeptide (Lys-Gly) (interchain with G-Cter in SUMO2) cross-link involves residue Lys-550. Ser-556 carries the phosphoserine modification. A disordered region spans residues 561 to 585 (VSRTGRHSERTVSAGKGSATSNWKK). A Glycyl lysine isopeptide (Lys-Gly) (interchain with G-Cter in SUMO2) cross-link involves residue Lys-585. Phosphoserine is present on Ser-598. Lys-605 is covalently cross-linked (Glycyl lysine isopeptide (Lys-Gly) (interchain with G-Cter in SUMO2)).

As to quaternary structure, homooligomer. Component of the nucleosome remodeling and deacetylase (NuRD) repressor complex, composed of core proteins MTA1, MTA2, MTA3, RBBP4, RBBP7, HDAC1, HDAC2, MBD2, MBD3, and peripherally associated proteins CDK2AP1, CDK2AP2, GATAD2A, GATAD2B, CHD3, CHD4 and CHD5. The exact stoichiometry of the NuRD complex is unknown, and some subunits such as MBD2 and MBD3, GATAD2A and GATAD2B, and CHD3, CHD4 and CHD5 define mutually exclusive NuRD complexes. Component of the MeCP1 histone deacetylase complex. Interacts with CDK2AP1. Interacts with CHD4. Interacts with ERCC6. Interacts with HDAC1. Interacts with HDAC2. Interacts with MBD2; this interaction is required for the enhancement of MBD2-mediated repression and for targeting to the chromatin. Interacts with MBD3. Interacts with MTA2. Interacts with ZMYND8. Interacts with histone tails, including that of histones H2A, H2B, H3 and H4, the interaction is reduced by histone acetylation. In terms of tissue distribution, ubiquitous, both in fetal and adult tissues.

Its subcellular location is the nucleus speckle. It is found in the nucleus. It localises to the chromosome. Transcriptional repressor. Acts as a component of the histone deacetylase NuRD complex which participates in the remodeling of chromatin. Enhances MBD2-mediated repression. Efficient repression requires the presence of GATAD2B. The protein is Transcriptional repressor p66-alpha (GATAD2A) of Homo sapiens (Human).